The chain runs to 509 residues: Carboxysome shell carbonic anhydrase (509 aa).

Cys-170 provides a ligand contact to Zn(2+). Residue Asp-172 is the Proton acceptor of the active site. Zn(2+) is bound by residues His-238 and Cys-249.

The protein belongs to the beta-class carbonic anhydrase family. CsoSCA subfamily. In terms of assembly, homodimer. The cofactor is Zn(2+).

The protein resides in the carboxysome. It carries out the reaction hydrogencarbonate + H(+) = CO2 + H2O. Functionally, reversible hydration of carbon dioxide. Essential for photosynthetic carbon dioxide fixation, supplies CO(2) to RuBisCO (ribulose bisphosphate carboxylase, cbbL-cbbS) in the carboxysome. There are estimated to be 29 CsoSCA oligomers per carboxysome. This Prochlorococcus marinus subsp. pastoris (strain CCMP1986 / NIES-2087 / MED4) protein is Carboxysome shell carbonic anhydrase.